Reading from the N-terminus, the 415-residue chain is Adipocyte plasma membrane-associated protein (415 aa).

The Cytoplasmic segment spans residues Met1 to Arg39. Residues Val40–Leu60 traverse the membrane as a helical segment. Over Glu61–Leu412 the chain is Extracellular. The N-linked (GlcNAc...) asparagine glycan is linked to Asn159.

The protein belongs to the strictosidine synthase family.

The protein resides in the membrane. In Danio rerio (Zebrafish), this protein is Adipocyte plasma membrane-associated protein (apmap).